Consider the following 189-residue polypeptide: Marginal zone B- and B1-cell-specific protein (189 aa).

Residues 1–22 (MRLSLPLLLLLLGAWAIPGGLG) form the signal peptide. Intrachain disulfides connect C50–C178, C53–C171, and C95–C143. Positions 186–189 (REEL) match the Prevents secretion from ER motif.

This sequence belongs to the MZB1 family. Part of the ER chaperone complex, a multi-protein complex in the endoplasmic reticulum containing a large number of molecular chaperones which associates with unassembled incompletely folded immunoglobulin heavy chains. Isoform 2 interacts with CASP2 and CASP9. Interacts with HSP90B1 and PDIA3 in a calcium-dependent manner. Post-translationally, forms an interchain disulfide bond with IgM monomers. As to expression, widely expressed with highest levels in adult brain, small intestine and lymphoid tissues such as thymus and spleen. Expression is frequently lower in intestinal-type gastric cancer. In obese patients, more abundant in omental than in subcutaneous fat.

Its subcellular location is the endoplasmic reticulum lumen. The protein localises to the secreted. It is found in the cytoplasm. Functionally, associates with immunoglobulin M (IgM) heavy and light chains and promotes IgM assembly and secretion. May exert its effect by acting as a molecular chaperone or as an oxidoreductase as it displays a low level of oxidoreductase activity. Isoform 2 may be involved in regulation of apoptosis. Helps to diversify peripheral B-cell functions by regulating Ca(2+) stores, antibody secretion and integrin activation. Its function is as follows. Acts as a hormone-regulated adipokine/pro-inflammatory cytokine that is implicated in causing chronic inflammation, affecting cellular expansion and blunting insulin response in adipocytes. May have a role in the onset of insulin resistance. In Homo sapiens (Human), this protein is Marginal zone B- and B1-cell-specific protein (MZB1).